A 471-amino-acid chain; its full sequence is UDP-N-acetylmuramate--L-alanine ligase (471 aa).

Position 114–120 (G114–T120) interacts with ATP.

It belongs to the MurCDEF family.

It is found in the cytoplasm. The catalysed reaction is UDP-N-acetyl-alpha-D-muramate + L-alanine + ATP = UDP-N-acetyl-alpha-D-muramoyl-L-alanine + ADP + phosphate + H(+). It participates in cell wall biogenesis; peptidoglycan biosynthesis. Functionally, cell wall formation. The chain is UDP-N-acetylmuramate--L-alanine ligase from Brucella abortus (strain S19).